The following is a 652-amino-acid chain: Acetyl-coenzyme A synthetase (652 aa).

Residues 189 to 192 (RGGK) and S311 each bind CoA. ATP-binding positions include 387 to 389 (GEP), 411 to 416 (DTWWQT), D500, and R515. S523 contacts CoA. Residue R526 participates in ATP binding. Mg(2+) contacts are provided by V537, H539, and I542. K584 contributes to the CoA binding site. Position 609 is an N6-acetyllysine (K609).

Belongs to the ATP-dependent AMP-binding enzyme family. Requires Mg(2+) as cofactor. Post-translationally, acetylated. Deacetylation by the SIR2-homolog deacetylase activates the enzyme.

The catalysed reaction is acetate + ATP + CoA = acetyl-CoA + AMP + diphosphate. Its function is as follows. Catalyzes the conversion of acetate into acetyl-CoA (AcCoA), an essential intermediate at the junction of anabolic and catabolic pathways. AcsA undergoes a two-step reaction. In the first half reaction, AcsA combines acetate with ATP to form acetyl-adenylate (AcAMP) intermediate. In the second half reaction, it can then transfer the acetyl group from AcAMP to the sulfhydryl group of CoA, forming the product AcCoA. The polypeptide is Acetyl-coenzyme A synthetase (Bartonella quintana (strain Toulouse) (Rochalimaea quintana)).